The chain runs to 577 residues: Cytochrome P450 714D1 (577 aa).

At M1 to S3 the chain is on the lumenal side. Residues F4–G24 form a helical; Signal-anchor for type III membrane protein membrane-spanning segment. Topologically, residues L25 to N577 are cytoplasmic. Positions R315 to P343 are disordered. C504 serves as a coordination point for heme.

The protein belongs to the cytochrome P450 family. Heme serves as cofactor. Expressed in rapidly elongating or dividing tissues, including the shoot apical meristem, the intercalary meristem and elongating zones of internodes, and panicle but not in young seedlings, roots and leaves. During the heading stage, the highest expression is detected in the flowering spikelets, anthers, the divisional zone and the node of the uppermost internode.

It localises to the endoplasmic reticulum membrane. Functionally, catalyzes the 16alpha,17-epoxidation on non-13-hydroxylated gibberellins (GAs), including GA4, GA9, and GA12. No activity with GA1, GA20, GA53 or ent-kaurenoic acid. Reduces the biological activity of GAs. The protein is Cytochrome P450 714D1 (CYP714D1) of Oryza sativa subsp. japonica (Rice).